The chain runs to 645 residues: ATP-dependent DNA helicase Rep (645 aa).

The 280-residue stretch at 1–280 folds into the UvrD-like helicase ATP-binding domain; sequence MSLNFSQKNA…IKMEHNYRSS (280 aa). Residues 22-29 and R278 contribute to the ATP site; that span reads AGAGSGKT. The UvrD-like helicase C-terminal domain occupies 281–562; that stretch reads GRILKAANSL…QLMTLHASKG (282 aa).

The protein belongs to the helicase family. UvrD subfamily. In terms of assembly, homodimer.

The catalysed reaction is Couples ATP hydrolysis with the unwinding of duplex DNA by translocating in the 3'-5' direction.. The enzyme catalyses ATP + H2O = ADP + phosphate + H(+). Functionally, rep helicase is a single-stranded DNA-dependent ATPase involved in DNA replication; it can initiate unwinding at a nick in the DNA. It binds to the single-stranded DNA and acts in a progressive fashion along the DNA in the 3' to 5' direction. The polypeptide is ATP-dependent DNA helicase Rep (Buchnera aphidicola subsp. Acyrthosiphon pisum (strain APS) (Acyrthosiphon pisum symbiotic bacterium)).